A 499-amino-acid polypeptide reads, in one-letter code: Histidine ammonia-lyase (499 aa).

The 5-imidazolinone (Ala-Gly) cross-link spans 142–144; sequence ASG. Residue serine 143 is modified to 2,3-didehydroalanine (Ser).

It belongs to the PAL/histidase family. Contains an active site 4-methylidene-imidazol-5-one (MIO), which is formed autocatalytically by cyclization and dehydration of residues Ala-Ser-Gly.

Its subcellular location is the cytoplasm. It catalyses the reaction L-histidine = trans-urocanate + NH4(+). Its pathway is amino-acid degradation; L-histidine degradation into L-glutamate; N-formimidoyl-L-glutamate from L-histidine: step 1/3. This is Histidine ammonia-lyase from Staphylococcus saprophyticus subsp. saprophyticus (strain ATCC 15305 / DSM 20229 / NCIMB 8711 / NCTC 7292 / S-41).